The chain runs to 1242 residues: ATP-dependent helicase/nuclease subunit A (1242 aa).

In terms of domain architecture, UvrD-like helicase ATP-binding spans 12–487 (SRWTDEQWKA…IDLASNFRSR (476 aa)). 33–40 (AAAGSGKT) is a binding site for ATP. The 295-residue stretch at 514-808 (AAQLKYGADY…RVMTIHSSKG (295 aa)) folds into the UvrD-like helicase C-terminal domain.

It belongs to the helicase family. AddA subfamily. Heterodimer of AddA and AddB/RexB. The cofactor is Mg(2+).

The enzyme catalyses Couples ATP hydrolysis with the unwinding of duplex DNA by translocating in the 3'-5' direction.. It carries out the reaction ATP + H2O = ADP + phosphate + H(+). The heterodimer acts as both an ATP-dependent DNA helicase and an ATP-dependent, dual-direction single-stranded exonuclease. Recognizes the chi site generating a DNA molecule suitable for the initiation of homologous recombination. The AddA nuclease domain is required for chi fragment generation; this subunit has the helicase and 3' -&gt; 5' nuclease activities. This chain is ATP-dependent helicase/nuclease subunit A, found in Geobacillus thermodenitrificans (strain NG80-2).